The following is a 167-amino-acid chain: Fluoride-specific ion channel FluC (167 aa).

4 helical membrane passes run histidine 32–alanine 52, isoleucine 69–valine 89, phenylalanine 102–phenylalanine 122, and leucine 137–leucine 157. Na(+) is bound by residues glycine 109 and serine 112.

The protein belongs to the fluoride channel Fluc/FEX (TC 1.A.43) family.

It localises to the cell inner membrane. The catalysed reaction is fluoride(in) = fluoride(out). With respect to regulation, na(+) is not transported, but it plays an essential structural role and its presence is essential for fluoride channel function. Fluoride-specific ion channel. Important for reducing fluoride concentration in the cell, thus reducing its toxicity. This Xanthomonas oryzae pv. oryzae (strain KACC10331 / KXO85) protein is Fluoride-specific ion channel FluC.